The chain runs to 284 residues: Aliphatic sulfonates import ATP-binding protein SsuB (284 aa).

One can recognise an ABC transporter domain in the interval 21 to 242 (LRIAHAVKRY…HRGAPAFARL (222 aa)). 53–60 (GRSGCGKS) contributes to the ATP binding site.

Belongs to the ABC transporter superfamily. Aliphatic sulfonates importer (TC 3.A.1.17.2) family. The complex is composed of two ATP-binding proteins (SsuB), two transmembrane proteins (SsuC) and a solute-binding protein (SsuA).

The protein localises to the cell inner membrane. The enzyme catalyses ATP + H2O + aliphatic sulfonate-[sulfonate-binding protein]Side 1 = ADP + phosphate + aliphatic sulfonateSide 2 + [sulfonate-binding protein]Side 1.. In terms of biological role, part of the ABC transporter complex SsuABC involved in aliphatic sulfonates import. Responsible for energy coupling to the transport system. The polypeptide is Aliphatic sulfonates import ATP-binding protein SsuB (Ralstonia nicotianae (strain ATCC BAA-1114 / GMI1000) (Ralstonia solanacearum)).